Here is a 736-residue protein sequence, read N- to C-terminus: ATP-dependent zinc metalloprotease FtsH (736 aa).

Disordered stretches follow at residues 1-39 and 57-83; these read MDSN…GQQR and QQTQ…RKKM. Residues 1-87 are Cytoplasmic-facing; it reads MDSNVDSQRV…ADRKKMPPGK (87 aa). Polar residues predominate over residues 57–73; the sequence is QQTQNRTGFASADTKQG. The chain crosses the membrane as a helical span at residues 88-108; the sequence is AWLWFVLILIVNFLMVRLLIP. Residues 109 to 205 are Periplasmic-facing; sequence DAEQPVMVPY…KPIHEERSPW (97 aa). A helical membrane pass occupies residues 206–226; that stretch reads ATIVYSFGPGLLFIAFYIWLF. Residues 227 to 736 are Cytoplasmic-facing; it reads RRMAQQGGLG…VSLPGVAGPS (510 aa). ATP is bound at residue 301–308; that stretch reads GAPGTGKT. A Zn(2+)-binding site is contributed by histidine 522. The active site involves glutamate 523. Zn(2+)-binding residues include histidine 526 and aspartate 598. The interval 706–736 is disordered; the sequence is PALDAGKLPVPDGGDKNAEPSVSLPGVAGPS.

This sequence in the central section; belongs to the AAA ATPase family. The protein in the C-terminal section; belongs to the peptidase M41 family. Homohexamer. Requires Zn(2+) as cofactor.

The protein localises to the cell inner membrane. In terms of biological role, acts as a processive, ATP-dependent zinc metallopeptidase for both cytoplasmic and membrane proteins. Plays a role in the quality control of integral membrane proteins. The protein is ATP-dependent zinc metalloprotease FtsH of Syntrophus aciditrophicus (strain SB).